Reading from the N-terminus, the 438-residue chain is Na(+)/H(+) antiporter NhaA (438 aa).

11 consecutive transmembrane segments (helical) span residues 23–43 (FGGI…NSFV), 62–82 (FFIG…LFFL), 104–124 (SFPV…YFFL), 133–153 (GFGI…MLLG), 162–182 (VFLI…IALF), 185–205 (TNLK…LALL), 212–232 (SLIP…QSGI), 302–322 (FLAP…NAGV), 337–357 (LGVI…ITFI), 372–392 (WWHI…SMFI), and 410–430 (IAIL…LFLL).

It belongs to the NhaA Na(+)/H(+) (TC 2.A.33) antiporter family.

It localises to the cell inner membrane. The catalysed reaction is Na(+)(in) + 2 H(+)(out) = Na(+)(out) + 2 H(+)(in). Functionally, na(+)/H(+) antiporter that extrudes sodium in exchange for external protons. This Helicobacter acinonychis (strain Sheeba) protein is Na(+)/H(+) antiporter NhaA.